A 65-amino-acid polypeptide reads, in one-letter code: Omega-lycotoxin-Am1f (65 aa).

Positions 1–18 (GDEEDEVEETLPVAEEGR) are excised as a propeptide. Disulfide bonds link Cys-22/Cys-37, Cys-29/Cys-42, Cys-36/Cys-62, and Cys-44/Cys-60.

The protein belongs to the neurotoxin omega-lctx family. As to expression, expressed by the venom gland.

It localises to the secreted. Modulates Cav2.1/CACNA1A voltage-gated calcium channels (P/Q-type currents) in rat cerebellar Purkinje cells and hippocampal CA1-CA3 neurons. At saturating concentrations (&gt;10 nM) decelerates activation kinetics and slightly increases peak amplitude without affecting deactivation kinetics. In vivo, does not cause death when intravenously injected into mice. In rat models, through its activity on Cav2.1/CACNA1A, has an ameliorative effect on memory defects provoked by hyperstimulation of N-methyl-D-aspartate receptors (NMDARs) in the hippocampus. This Alopecosa marikovskyi (Wolf spider) protein is Omega-lycotoxin-Am1f.